We begin with the raw amino-acid sequence, 164 residues long: Phosphopantetheine adenylyltransferase (164 aa).

S9 lines the substrate pocket. ATP is bound by residues 9-10 (SF) and H17. K41, V78, and R92 together coordinate substrate. Residues 93-95 (GLR), E103, and 128-134 (SRPITAT) each bind ATP.

This sequence belongs to the bacterial CoaD family. In terms of assembly, homohexamer. It depends on Mg(2+) as a cofactor.

It is found in the cytoplasm. It catalyses the reaction (R)-4'-phosphopantetheine + ATP + H(+) = 3'-dephospho-CoA + diphosphate. It functions in the pathway cofactor biosynthesis; coenzyme A biosynthesis; CoA from (R)-pantothenate: step 4/5. In terms of biological role, reversibly transfers an adenylyl group from ATP to 4'-phosphopantetheine, yielding dephospho-CoA (dPCoA) and pyrophosphate. This chain is Phosphopantetheine adenylyltransferase, found in Sinorhizobium fredii (strain NBRC 101917 / NGR234).